The following is a 185-amino-acid chain: Mu-like prophage FluMu protein gp16 (185 aa).

The protein to phage Mu protein gp16.

The chain is Mu-like prophage FluMu protein gp16 from Haemophilus influenzae (strain ATCC 51907 / DSM 11121 / KW20 / Rd).